Reading from the N-terminus, the 523-residue chain is MTHAGMKASLPNRVMLNAYPDSIDGDLAGTVRMLQRPEFTDAFGLFYVLPSIFNSDLDRGFSIIDYDLNSDLASAEDLAALDELGIMLKFDMVLNHLSVGSPQFQDLLKHGDDSAFRDFFIDWNEFWEGEGELHADGHVVPSPEHLDRLFMRKPGLPILQVRFPDGSDRFYWNTFYQRVETIDGERSYLGQMDLNAESPRVWTFYRETFEKLARYGAKIVRLDAFAYLHKAVGDTNFFNTPGTWDHLDRLRTISEENGLVLLPEIHGEYGTKIHEELSDRDYPVYDFFFPGLVIDAIDSASNTHLLRWIDEIIERDIATVNMLGCHDGIPVIDLKGGPTGQGLLPDATIEAMISRLLERGGRVKNLYGADGTKVSYYQVNATFFSALGESDARLRLARAIQLFVPGTPQVWYLDLFAGANDVEAADRAGADGHKEINRTNLSAADVEAGLARPIVLDQLEMIRLRNASPAFDGRFEVVPTDDTRLQLRWQNGSTVALLDADLATERFTITHEHDGHTEILGYD.

Residues Asp58, His96, 221–223, Glu264, 326–327, and Lys434 each bind sucrose 6(F)-phosphate; these read RLD and HD. Asp223 serves as the catalytic Nucleophile. Residue Glu264 is the Proton donor/acceptor of the active site.

The protein belongs to the glycosyl hydrolase 13 family. Sucrose phosphorylase subfamily. As to quaternary structure, monomer.

It carries out the reaction sucrose 6(F)-phosphate + phosphate = beta-D-fructose 6-phosphate + alpha-D-glucose 1-phosphate. In terms of biological role, catalyzes the reversible phosphorolysis of sucrose 6(F)-phosphate into alpha-D-glucose 1-phosphate (Glc1P) and D-fructose 6-phosphate. May be involved in a new pathway for the degradation of sucrose, which could become phosphorylated on its fructose moiety during uptake via a PTS system. Shows strict specificity since it does not catalyze reactions with alternative substrates. The chain is Sucrose 6(F)-phosphate phosphorylase from Ilumatobacter coccineus (strain NBRC 103263 / KCTC 29153 / YM16-304).